We begin with the raw amino-acid sequence, 330 residues long: MSATPIIHLRDVKKRTGVLNAWERVRNKPQVHWAMECFAEALGVFFYVYFGLGSTAAWVIGNILKQSGLSSVFQIGFAYAFGILFAIGVCAATSGGHFNPCVTIAFTIFRGFPPLKAVRYIVAQILGAYIASALVYNQWKVLIVESELLLKQAGVYETTMFTPNGPAGIFALYLLPGAQTLPRAFLNEFVNCFVLALVIWAALDPTSFMIPPVMAPFIIAAAYAGSIWGYAVPAISLNSARDIGCRLFALTIWGKSAAGGSYSAITALVNIPATLLAAVVYELFLVDSDRVVAGSHLEFMNVAANHRRHRHQAEDDNHGDADDSSQEKPV.

The Cytoplasmic segment spans residues 1-40 (MSATPIIHLRDVKKRTGVLNAWERVRNKPQVHWAMECFAE). Residues 41 to 61 (ALGVFFYVYFGLGSTAAWVIG) form a helical membrane-spanning segment. Residues 62–71 (NILKQSGLSS) are Extracellular-facing. Residues 72-92 (VFQIGFAYAFGILFAIGVCAA) form a helical membrane-spanning segment. The Cytoplasmic segment spans residues 93–124 (TSGGHFNPCVTIAFTIFRGFPPLKAVRYIVAQ). The NPA 1 motif lies at 99–101 (NPC). The helical transmembrane segment at 125 to 145 (ILGAYIASALVYNQWKVLIVE) threads the bilayer. Residues 146 to 157 (SELLLKQAGVYE) lie on the Extracellular side of the membrane. The helical transmembrane segment at 158–178 (TTMFTPNGPAGIFALYLLPGA) threads the bilayer. Topologically, residues 179–183 (QTLPR) are cytoplasmic. Residues 184 to 204 (AFLNEFVNCFVLALVIWAALD) traverse the membrane as a helical segment. Over 205 to 207 (PTS) the chain is Extracellular. A helical membrane pass occupies residues 208-228 (FMIPPVMAPFIIAAAYAGSIW). The Cytoplasmic segment spans residues 229 to 264 (GYAVPAISLNSARDIGCRLFALTIWGKSAAGGSYSA). The NPA 2 signature appears at 238 to 240 (NSA). The helical transmembrane segment at 265–285 (ITALVNIPATLLAAVVYELFL) threads the bilayer. The Extracellular segment spans residues 286-330 (VDSDRVVAGSHLEFMNVAANHRRHRHQAEDDNHGDADDSSQEKPV). Residues 308–330 (RHRHQAEDDNHGDADDSSQEKPV) form a disordered region. Positions 312-330 (QAEDDNHGDADDSSQEKPV) are enriched in basic and acidic residues.

Belongs to the MIP/aquaporin (TC 1.A.8) family.

The protein resides in the membrane. Its function is as follows. Water channel-like protein that does not show transport of water nor ammonium across membranes. The chain is Aquaporin Lacbi1:307192 from Laccaria bicolor (strain S238N-H82 / ATCC MYA-4686) (Bicoloured deceiver).